We begin with the raw amino-acid sequence, 214 residues long: Transcription factor 23 (214 aa).

Disordered regions lie at residues 1 to 86 and 174 to 214; these read MSQR…ARER and DSTT…LGDK. Residues 40–49 are compositionally biased toward basic and acidic residues; the sequence is TRQDPWEERS. The bHLH domain occupies 76–128; sequence EASPENAARERSRVRTLRQAFLALQAALPAVPPDTKLSKLDVLVLAASYIAHL. The span at 174 to 183 shows a compositional bias: polar residues; it reads DSTTASTPSQ.

As to quaternary structure, forms inactive heterodimeric complexes with TCF3. Expressed in liver, kidney and spleen.

The protein localises to the nucleus. Inhibits E-box-mediated binding and transactivation of bHLH factors. Inhibitory effect is similar to that of ID proteins. Inhibits the formation of TCF3 and MYOD1 homodimers and heterodimers. Lacks DNA binding activity. Seems to play a role in the inhibition of myogenesis. This chain is Transcription factor 23 (TCF23), found in Homo sapiens (Human).